Consider the following 575-residue polypeptide: Amyloid-beta A4 precursor protein-binding family A member 3 (575 aa).

N-acetylmethionine is present on Met-1. Positions 1-10 (MDFPTISRSP) are enriched in polar residues. Disordered regions lie at residues 1–50 (MDFP…LSRM) and 118–211 (CEEC…GPCD). Residue Ser-11 is modified to Phosphoserine. Positions 143-153 (EDPDEDSDSPE) are enriched in acidic residues. A compositionally biased stretch (low complexity) spans 156-184 (EGASAEQEGSRSSSSSPEPWLETVPLVTP). At Ser-171 the chain carries Phosphoserine. Residues 215-364 (LLDGVIFGAR…QFLRESGIDP (150 aa)) form a required for interaction with NECAB3 region. The 165-residue stretch at 217 to 381 (DGVIFGARYL…SPGACHLHNG (165 aa)) folds into the PID domain. Ser-372 carries the phosphoserine modification. PDZ domains are found at residues 394–480 (EVHL…IVHC) and 485–560 (TAII…TMPA).

Binds to the cytoplasmic domain of amyloid protein (APP) in vivo. Interacts with HIF1AN (via N-terminus). Interacts with NECAB3; seems to mediate the interaction between NECAB3 and HIF1AN. As to expression, expressed in all tissues examined with lower levels in brain and testis.

It localises to the cytoplasm. Its subcellular location is the perinuclear region. In terms of biological role, may modulate processing of the amyloid-beta precursor protein (APP) and hence formation of APP-beta. May enhance the activity of HIF1A in macrophages by inhibiting the activity of HIF1AN. This Homo sapiens (Human) protein is Amyloid-beta A4 precursor protein-binding family A member 3 (APBA3).